The chain runs to 467 residues: Acetyl-CoA decarbonylase/synthase complex subunit beta (467 aa).

C193, C196, C282, and C284 together coordinate [Ni-Fe-S] cluster. The tract at residues 403–428 is disordered; that stretch reads RWAEEEEEEEEKAPEEEAPAEEPTME. A compositionally biased stretch (acidic residues) spans 405-426; sequence AEEEEEEEEKAPEEEAPAEEPT.

This sequence belongs to the CdhC family. In terms of assembly, monomer. The ACDS complex is made up of alpha, epsilon, beta, gamma and delta chains with a probable stoichiometry of (alpha(2)epsilon(2))(4)-beta(8)-(gamma(1)delta(1))(8). It depends on [Ni-Fe-S] cluster as a cofactor.

It catalyses the reaction Co(I)-[corrinoid Fe-S protein] + acetyl-CoA + H(+) = methyl-Co(III)-[corrinoid Fe-S protein] + CO + CoA. Functionally, part of a complex that catalyzes the reversible cleavage of acetyl-CoA, allowing autotrophic growth from CO(2). The alpha-epsilon complex generates CO from CO(2), while the beta subunit (this protein) combines the CO with CoA and a methyl group to form acetyl-CoA. The methyl group, which is incorporated into acetyl-CoA, is transferred to the beta subunit by a corrinoid iron-sulfur protein (the gamma-delta complex). The sequence is that of Acetyl-CoA decarbonylase/synthase complex subunit beta from Methanopyrus kandleri (strain AV19 / DSM 6324 / JCM 9639 / NBRC 100938).